The chain runs to 287 residues: Ribonuclease HII (287 aa).

An RNase H type-2 domain is found at 61 to 287 (ALQIGVDEAG…FAPVRKALES (227 aa)). Residues Asp-67, Glu-68, and Asp-186 each coordinate a divalent metal cation.

It belongs to the RNase HII family. The cofactor is Mn(2+). It depends on Mg(2+) as a cofactor.

Its subcellular location is the cytoplasm. It carries out the reaction Endonucleolytic cleavage to 5'-phosphomonoester.. Its function is as follows. Endonuclease that specifically degrades the RNA of RNA-DNA hybrids. The chain is Ribonuclease HII from Psychrobacter arcticus (strain DSM 17307 / VKM B-2377 / 273-4).